The following is a 1343-amino-acid chain: Spermatogenesis-associated protein 31A6 (1343 aa).

The chain crosses the membrane as a helical span at residues 23 to 43; it reads PWVLDIFLTLVFALGFFFLLL. 6 disordered regions span residues 55-88, 106-235, 624-654, 895-951, 1080-1156, and 1309-1331; these read PSPS…RECP, GPHL…STLI, DESP…EAQK, PRGI…REAV, VQEE…PPSV, and KAVS…SHHH. Residues 60–82 show a composition bias toward basic residues; that stretch reads GKRKCPVGRRRRPRGRMKNHSLR. The span at 165–178 shows a compositional bias: polar residues; that stretch reads LASTPSPGPMTTSV. Positions 198–222 are enriched in pro residues; that stretch reads PEPPALFPHPPHTPDPLACSPPPPK. Polar residues-rich tracts occupy residues 627–647 and 923–944; these read PGTS…STGE and LTYS…SSKA. 2 stretches are compositionally biased toward basic and acidic residues: residues 1104 to 1123 and 1133 to 1142; these read HKSE…RLEG and RKTEDTHQDE.

The protein belongs to the SPATA31 family.

The protein localises to the membrane. May play a role in spermatogenesis. The polypeptide is Spermatogenesis-associated protein 31A6 (SPATA31A6) (Homo sapiens (Human)).